Reading from the N-terminus, the 1283-residue chain is Rab11 family-interacting protein 1 (1283 aa).

In terms of domain architecture, C2 spans 1–126; sequence MSLMVSAGRG…DQGRRKTQWY (126 aa). The segment covering 161–185 has biased composition (basic and acidic residues); sequence SMKDKSRNPFGKLKDKIKGKNKDSG. Residues 161–281 form a disordered region; it reads SMKDKSRNPF…VMSHKRTAST (121 aa). Residues Ser184, Ser202, Ser206, and Ser234 each carry the phosphoserine modification. Residues 225 to 239 are compositionally biased toward polar residues; that stretch reads NLQKTPLSQSMSVLP. The segment covering 257–266 has biased composition (acidic residues); sequence WDEDDNEDES. 9 positions are modified to phosphoserine: Ser300, Ser315, Ser339, Ser341, Ser343, Ser345, Ser356, Ser357, and Ser382. Disordered regions lie at residues 330–727, 741–782, 835–913, 969–993, and 1037–1141; these read EAKG…QEVP, VGEL…ASVP, PQEL…LFRM, DERI…KSST, and ASVT…RVEN. A compositionally biased stretch (basic and acidic residues) spans 419 to 433; it reads ATKEAKESKKPESRR. Ser435 is modified (phosphoserine). Basic and acidic residues predominate over residues 442-451; the sequence is GKKDVAKGSE. Ser477 carries the phosphoserine modification. Residues 482–491 show a composition bias toward basic and acidic residues; that stretch reads DLVRRSEKDT. Phosphoserine is present on residues Ser529 and Ser545. The segment covering 588-612 has biased composition (low complexity); the sequence is SSESPSVFSSLSSPIAAPISTSTPI. The span at 637–652 shows a compositional bias: polar residues; it reads QTESLTPVPNSGSSAL. Residues 698–715 show a composition bias toward basic and acidic residues; sequence ETGRQEEELPRFPCKKQD. A Phosphoserine modification is found at Ser758. Positions 855-866 are enriched in basic and acidic residues; it reads ESPHAEDSERES. Positions 975-986 are enriched in acidic residues; the sequence is VEDDGDQVEDDG. Over residues 1037-1048 the composition is skewed to polar residues; it reads ASVTAPSEQTTE. Over residues 1116–1131 the composition is skewed to basic and acidic residues; sequence SDTHHTSTAESQKKAT. Position 1135 is a phosphoserine (Ser1135). Residues 1211-1273 enclose the FIP-RBD domain; sequence KKYSPSDPAF…EETPNILRIP (63 aa). A necessary for interaction with RAB4A and RAB11A, subcellular location and endosomal recycling region spans residues 1219–1283; it reads AFAYAQLTHD…TQVGKKAGKM (65 aa).

Interacts with RAB11A (GTP-bound form); the interaction induces RAB11FIP1 recruitment to membranes. Interacts with RAB14 (GTP-bound form). As to quaternary structure, homooligomer. Isoform 2 interacts with RAB4A, RAB11A, RAB11B and RAB25. According to PubMed:15280022, RAB4A binding to RAB11FIP1 is of very low affinity in vitro and in vivo. As to expression, isoform 2 is expressed in brain, heart, testis, lung, spleen, ovary and small intestine.

Its subcellular location is the recycling endosome. The protein localises to the cytoplasmic vesicle. It localises to the phagosome membrane. Functionally, a Rab11 effector protein involved in the endosomal recycling process. Also involved in controlling membrane trafficking along the phagocytic pathway and in phagocytosis. Interaction with RAB14 may function in the process of neurite formation. This Homo sapiens (Human) protein is Rab11 family-interacting protein 1.